The sequence spans 231 residues: Ribonuclease 3 (231 aa).

Positions M1–G134 constitute an RNase III domain. Position 47 (E47) interacts with Mg(2+). D51 is an active-site residue. Residues D120 and E123 each contribute to the Mg(2+) site. E123 is a catalytic residue. In terms of domain architecture, DRBM spans D160–R229.

The protein belongs to the ribonuclease III family. As to quaternary structure, homodimer. The cofactor is Mg(2+).

The protein resides in the cytoplasm. The catalysed reaction is Endonucleolytic cleavage to 5'-phosphomonoester.. In terms of biological role, digests double-stranded RNA. Involved in the processing of primary rRNA transcript to yield the immediate precursors to the large and small rRNAs (23S and 16S). Also processes some mRNAs, and tRNAs when they are encoded in the rRNA operon. Functionally, CRISPR (clustered regularly interspaced short palindromic repeat) is an adaptive immune system that provides protection against mobile genetic elements (viruses, transposable elements and conjugative plasmids). CRISPR clusters contain spacers, sequences complementary to antecedent mobile elements, and target invading nucleic acids. CRISPR clusters are transcribed and processed into CRISPR RNA (crRNA). In this organism endogenous ribonuclease 3 and Cas9 are required for correct coprocessing of pre-crRNA and the trans-encoded small RNA (tracrRNA). Cas9, crRNA and tracrRNA are required for cleavage of invading DNA. Complements pre-crRNA and tracrRNA coprocessing defects in an rnc deletion in S.pyogenes strain 370. The chain is Ribonuclease 3 from Streptococcus mutans serotype c (strain ATCC 700610 / UA159).